The following is a 498-amino-acid chain: ATP synthase subunit beta, chloroplastic (498 aa).

172–179 (GGAGVGKT) provides a ligand contact to ATP.

It belongs to the ATPase alpha/beta chains family. In terms of assembly, F-type ATPases have 2 components, CF(1) - the catalytic core - and CF(0) - the membrane proton channel. CF(1) has five subunits: alpha(3), beta(3), gamma(1), delta(1), epsilon(1). CF(0) has four main subunits: a(1), b(1), b'(1) and c(9-12).

It localises to the plastid. Its subcellular location is the chloroplast thylakoid membrane. The enzyme catalyses ATP + H2O + 4 H(+)(in) = ADP + phosphate + 5 H(+)(out). Produces ATP from ADP in the presence of a proton gradient across the membrane. The catalytic sites are hosted primarily by the beta subunits. The polypeptide is ATP synthase subunit beta, chloroplastic (Aristolochia macrophylla (Dutchman's pipe vine)).